A 470-amino-acid polypeptide reads, in one-letter code: Cysteine--tRNA ligase (470 aa).

Position 27 (Cys-27) interacts with Zn(2+). The 'HIGH' region signature appears at 29–39 (PTVYNHIHIGN). Residues Cys-207, His-232, and Glu-236 each contribute to the Zn(2+) site. A 'KMSKS' region motif is present at residues 265-269 (KMAKS). Residue Lys-268 coordinates ATP.

It belongs to the class-I aminoacyl-tRNA synthetase family. Monomer. Requires Zn(2+) as cofactor.

The protein localises to the cytoplasm. The enzyme catalyses tRNA(Cys) + L-cysteine + ATP = L-cysteinyl-tRNA(Cys) + AMP + diphosphate. This chain is Cysteine--tRNA ligase, found in Rubrobacter xylanophilus (strain DSM 9941 / JCM 11954 / NBRC 16129 / PRD-1).